The primary structure comprises 168 residues: Photosystem I assembly protein Ycf3 (168 aa).

3 TPR repeats span residues 35 to 68 (AFTYYRDGMSAQSEGNYAEALQNYYEAMRLEIDP), 72 to 105 (SYILYNIGLIHTSNGEHTKALEYYFRALERNPFL), and 120 to 153 (GEQAIRQGDSEIAEAWFDQAAEYWKQAIALTPGN).

It belongs to the Ycf3 family.

It localises to the plastid. Its subcellular location is the chloroplast thylakoid membrane. Its function is as follows. Essential for the assembly of the photosystem I (PSI) complex. May act as a chaperone-like factor to guide the assembly of the PSI subunits. This Daucus carota (Wild carrot) protein is Photosystem I assembly protein Ycf3.